A 2211-amino-acid polypeptide reads, in one-letter code: Coagulation factor V (2211 aa).

Residues 1–28 (MFLACPGFWVLVVLGSSWAGWGNLGAEA) form the signal peptide. 4 Plastocyanin-like domains span residues 30–193 (KLRQ…LLIC), 203–327 (TQKM…IDIK), 348–525 (KRWE…LLIC), and 535–686 (IQRA…FRDA). 2 consecutive F5/8 type A domains span residues 30 to 327 (KLRQ…IDIK) and 348 to 686 (KRWE…FRDA). 2 residues coordinate Ca(2+): aspartate 139 and aspartate 140. Cysteine 167 and cysteine 193 are oxidised to a cystine. N-linked (GlcNAc...) asparagine glycans are attached at residues asparagine 225, asparagine 239, asparagine 297, asparagine 382, and asparagine 460. A disulfide bridge links cysteine 248 with cysteine 329. Cysteine 499 and cysteine 525 are disulfide-bonded. Asparagine 553 and asparagine 587 each carry an N-linked (GlcNAc...) asparagine glycan. Cysteine 607 and cysteine 688 are disulfide-bonded. Threonine 644 carries the phosphothreonine modification. The tract at residues 696–1564 (SYEIIYEPSG…PDNIAAWYLR (869 aa)) is b. Sulfotyrosine is present on residues tyrosine 697, tyrosine 701, and tyrosine 730. Positions 742–1564 (SFRNSSLNQE…PDNIAAWYLR (823 aa)) are cleaved as a propeptide — activation peptide (connecting region). Residues asparagine 745, asparagine 756, asparagine 774, and asparagine 780 are each glycosylated (N-linked (GlcNAc...) asparagine). The interval 814 to 844 (LEHAGLDKNSALNPPMAEHSSPYSEDPREDH) is disordered. Asparagine 902, asparagine 952, and asparagine 964 each carry an N-linked (GlcNAc...) asparagine glycan. Polar residues predominate over residues 954–969 (TVNKLPNSPQNDSRTW). The disordered stretch occupies residues 954–1039 (TVNKLPNSPQ…PLSPRSFHPL (86 aa)). Positions 995–1009 (PLQDRQDRRNSRLKE) are enriched in basic and acidic residues. 6 N-linked (GlcNAc...) asparagine glycosylation sites follow: asparagine 1044, asparagine 1053, asparagine 1062, asparagine 1071, asparagine 1078, and asparagine 1094. Disordered regions lie at residues 1084-1162 (SLPD…IPNY) and 1195-1471 (QPSI…FGQT). Composition is skewed to polar residues over residues 1091–1103 (TSPN…TSSP) and 1127–1160 (THST…SQIP). Tandem repeats lie at residues 1124-1137 (SDPT…SNRS), 1138-1151 (PDPT…SNRS), 1188-1196 (ATSLDLSQP), 1197-1205 (SISPDLGQM), 1206-1214 (ALSPDPGQE), 1215-1223 (SLSPDLGQT), 1224-1232 (SLSPDLSQE), 1233-1241 (SLSPDLGQT), 1242-1250 (ALSPDPSQE), 1251-1259 (SLSPDLGQT), 1260-1268 (ALSPDPSQE), 1269-1277 (SLSPDLGQT), 1278-1286 (ALSPDPGQE), 1287-1295 (SLSPDLGQT), 1296-1304 (SLSPDLSQE), 1305-1313 (SLSPDLGQT), 1314-1322 (ALSPDPSQE), 1323-1331 (SLSPDLGQT), 1332-1340 (ALSPDPSQE), 1341-1349 (SLSPDLGQT), 1350-1358 (SLSPDLGQE), 1359-1367 (SLSPDLGQT), 1368-1376 (ALSPDPSQE), 1377-1385 (SLSPDLGQT), 1386-1394 (SLSPDLGQE), 1395-1403 (SLSPDLGQT), 1404-1412 (ALSPDLSQE), 1413-1421 (SLSPDLGQT), 1422-1430 (PLSPDLSLE), and 1431-1439 (SLSPDLSQL). Residues 1124–1151 (SDPTHSTTAPSNRSPDPTHSTTAPSNRS) form a 2 X 14 AA tandem repeats region. Positions 1188-1453 (ATSLDLSQPS…TSPPLDLNQT (266 aa)) are 30 X 9 AA approximate tandem repeats of [AS]-L-S-P-D-[LP]-[GS]-Q-[TE]. Polar residues-rich tracts occupy residues 1214–1234 (ESLS…QESL), 1241–1252 (TALSPDPSQESL), 1259–1270 (TALSPDPSQESL), 1286–1306 (ESLS…QESL), 1313–1324 (TALSPDPSQESL), 1331–1352 (TALS…TSLS), 1367–1388 (TALS…TSLS), and 1403–1414 (TALSPDLSQESL). Low complexity predominate over residues 1422–1441 (PLSPDLSLESLSPDLSQLDL). A 2-29; truncated repeat occupies 1440–1444 (DLKQT). Over residues 1442 to 1463 (KQTSPPLDLNQTSHTSESSQSL) the composition is skewed to polar residues. The 2-30 repeat unit spans residues 1445–1453 (SPPLDLNQT). N-linked (GlcNAc...) asparagine glycans are attached at residues asparagine 1451 and asparagine 1490. Sulfotyrosine is present on residues tyrosine 1513, tyrosine 1529, tyrosine 1537, and tyrosine 1541. N-linked (GlcNAc...) asparagine glycosylation is found at asparagine 1550 and asparagine 1690. 2 consecutive Plastocyanin-like domains span residues 1569–1738 (NRKY…LLIC) and 1748–1890 (NMPV…FLIV). One can recognise an F5/8 type A 3 domain in the interval 1569-1890 (NRKYYYIAAE…AGMQTPFLIV (322 aa)). A disulfide bridge links cysteine 1712 with cysteine 1738. Histidine 1830 and histidine 1832 together coordinate Cu cation. Asparagine 1839 carries N-linked (GlcNAc...) asparagine glycosylation. Aspartate 1872 lines the Cu cation pocket. 2 disulfide bridges follow: cysteine 1894/cysteine 2048 and cysteine 2053/cysteine 2208. F5/8 type C domains are found at residues 1894–2048 (CKMP…LQGC) and 2053–2208 (CSTP…LFGC). Residues asparagine 1997 and asparagine 2196 are each glycosylated (N-linked (GlcNAc...) asparagine).

It belongs to the multicopper oxidase family. As to quaternary structure, factor Va, the activated form of factor V, is composed of a heavy chain and a light chain, non-covalently bound. The interaction between the two chains is calcium-dependent. Forms heterodimer with SERPINA5. Post-translationally, thrombin activates factor V proteolytically to the active cofactor, factor Va (formation of a heavy chain at the N-terminus and a light chain at the C-terminus). In terms of processing, sulfation is required for efficient thrombin cleavage and activation and for full procoagulant activity. Activated protein C inactivates factor V and factor Va by proteolytic degradation.

Its subcellular location is the secreted. With respect to regulation, inhibited by SERPINA5. Its function is as follows. Central regulator of hemostasis. It serves as a critical cofactor for the prothrombinase activity of factor Xa that results in the activation of prothrombin to thrombin. This is Coagulation factor V (F5) from Bos taurus (Bovine).